The sequence spans 362 residues: 3-dehydroquinate synthase (362 aa).

Residues 71 to 76 (DGEQYK), 105 to 109 (GVVGD), 129 to 130 (TT), K142, K151, and 169 to 172 (CLKT) each bind NAD(+). The Zn(2+) site is built by E184, H247, and H264.

Belongs to the sugar phosphate cyclases superfamily. Dehydroquinate synthase family. Co(2+) serves as cofactor. Zn(2+) is required as a cofactor. Requires NAD(+) as cofactor.

The protein resides in the cytoplasm. The catalysed reaction is 7-phospho-2-dehydro-3-deoxy-D-arabino-heptonate = 3-dehydroquinate + phosphate. Its pathway is metabolic intermediate biosynthesis; chorismate biosynthesis; chorismate from D-erythrose 4-phosphate and phosphoenolpyruvate: step 2/7. Functionally, catalyzes the conversion of 3-deoxy-D-arabino-heptulosonate 7-phosphate (DAHP) to dehydroquinate (DHQ). The sequence is that of 3-dehydroquinate synthase from Shigella boydii serotype 18 (strain CDC 3083-94 / BS512).